The sequence spans 2032 residues: Cytoskeleton-associated protein 5 (2032 aa).

TOG regions lie at residues 1–223 (MGDD…KLPT) and 268–502 (YELL…LIHG). Lys-48 carries the N6-acetyllysine modification. HEAT repeat units follow at residues 159 to 197 (IILLKPIIKVLPKLFESREKAVRDEAKLIAVEIYRWIRD), 356 to 394 (GQYAGHVVPTILEKFKEKKPQVVQALQEAIDAIFLTTTL), and 434 to 472 (KSLLKPFCAALLKHINDSAPEVRDAAFEALGTALKVVGE). The tract at residues 516-579 (PLPGRTAASG…GTKNKKGLET (64 aa)) is disordered. A compositionally biased stretch (low complexity) spans 543 to 554 (LKKAPAAKAGGP). The TOG 3 stretch occupies residues 588–817 (SIEVCEEKAS…EFEKMQGQSP (230 aa)). An HEAT 4 repeat occupies 750 to 788 (GLNVKAFISNVKTALAATNPAVRTAAITLLGVMYLYVGP). Residues 811 to 851 (KMQGQSPPAPTRGISKHSTSGTDEGEDGDEPDDGSNDVVDL) form a disordered region. Ser-816 and Ser-845 each carry phosphoserine. Residues 833–845 (DEGEDGDEPDDGS) show a composition bias toward acidic residues. 2 TOG regions span residues 853 to 1081 (PRTE…VNMP) and 1193 to 1428 (IEQL…KRPS). HEAT repeat units follow at residues 855 to 893 (TEISDKITSELVSKIGDKNWKIRKEGLDEVAGIINDAKF), 936 to 974 (KQHVKNLGIPIITVLGDSKNNVRAAALATVNAWAEQTGM), and 1013 to 1051 (PTDLILCVPHLYSCLEDRNGDVRKKAQDALPFFMMHLGY). Residues 1077-1160 (KVNMPAKPAP…KEDEDKSGPI (84 aa)) form a disordered region. HEAT repeat units lie at residues 1284 to 1322 (ENEASSFIPYLVVKVGEPKDVIRKDVRAILNRMCLVYPA), 1324 to 1357 (KMFPFIMEGTKSKNSKQRAECLEELGCLVESYGM), and 1361 to 1399 (QPTPGKALKEIAVHIGDRDNAVRNAALNTIVTVYNVHGD). Positions 1422-1443 (RSAKRPSAAPIKQVEEKPQRAQ) are disordered. The residue at position 1469 (Ser-1469) is a Phosphoserine. Residues 1801-1822 (SMDQTGSKSDKETEKGASRIDE) are disordered. The span at 1808–1822 (KSDKETEKGASRIDE) shows a compositional bias: basic and acidic residues. Phosphoserine is present on Ser-1861. Residues 1932 to 1957 (PSVYLERLKILRQRCGLDNTKQDDRP) form an interaction with TACC3 region. The interval 1949 to 2032 (DNTKQDDRPP…RLERIKSSRK (84 aa)) is disordered. Residues 1971-1983 (VASSTDMLHSKLS) are compositionally biased toward polar residues. Basic and acidic residues predominate over residues 1984–1997 (QLRESREQHQHSDL). Residues 2002–2014 (THSSGTVTSSSST) are compositionally biased toward low complexity. The segment covering 2018–2032 (DDLKKRLERIKSSRK) has biased composition (basic and acidic residues).

This sequence belongs to the TOG/XMAP215 family. As to quaternary structure, interacts with TACC1. Interacts with SLAIN2 and SLAIN1. Interacts with HNRNPA2B1. Interacts with TACC3 independently of clathrin. Interacts with TACC3 and clathrin forming the TACC3/ch-TOG/clathrin complex located at spindle inter-microtubules bridges. Interacts with NDC80; indicative for an association with the NDC80 complex. In terms of tissue distribution, overexpressed in hepatomas and colonic tumors. Also expressed in skeletal muscle, brain, heart, placenta, lung, liver, kidney and pancreas. Expression is elevated in the brain; highly expressed in the Purkinje cell bodies of the cerebellum.

The protein resides in the cytoplasm. It localises to the cytoskeleton. Its subcellular location is the microtubule organizing center. The protein localises to the centrosome. It is found in the spindle pole. The protein resides in the spindle. It localises to the chromosome. Its subcellular location is the centromere. The protein localises to the kinetochore. Binds to the plus end of microtubules and regulates microtubule dynamics and microtubule organization. Acts as a processive microtubule polymerase. Promotes cytoplasmic microtubule nucleation and elongation. Plays a major role in organizing spindle poles. In spindle formation protects kinetochore microtubules from depolymerization by KIF2C and has an essential role in centrosomal microtubule assembly independently of KIF2C activity. Contributes to centrosome integrity. Acts as a component of the TACC3/ch-TOG/clathrin complex proposed to contribute to stabilization of kinetochore fibers of the mitotic spindle by acting as inter-microtubule bridge. The TACC3/ch-TOG/clathrin complex is required for the maintenance of kinetochore fiber tension. Enhances the strength of NDC80 complex-mediated kinetochore-tip microtubule attachments. The polypeptide is Cytoskeleton-associated protein 5 (CKAP5) (Homo sapiens (Human)).